Reading from the N-terminus, the 245-residue chain is Deoxyadenosine kinase (245 aa).

28–36 (GLIGAGKTT) contributes to the ATP binding site. Substrate-binding residues include Glu52, Tyr64, and Gln75. The active-site Proton acceptor is Asp99. Substrate is bound by residues Arg100, Asp105, and Glu165.

The protein belongs to the DCK/DGK family.

It catalyses the reaction 2'-deoxyadenosine + ATP = dAMP + ADP + H(+). In terms of biological role, specific kinase that phosphorylates deoxyadenosine but not any other deoxyribonucleoside, as part of the deoxyribonucleotide salvage pathway. In Dictyostelium discoideum (Social amoeba), this protein is Deoxyadenosine kinase (dak).